Here is a 998-residue protein sequence, read N- to C-terminus: Type II restriction enzyme and methyltransferase RM.Eco57I (998 aa).

In the C-terminal section; belongs to the N(4)/N(6)-methyltransferase family. In terms of assembly, monomer.

The catalysed reaction is Endonucleolytic cleavage of DNA to give specific double-stranded fragments with terminal 5'-phosphates.. It catalyses the reaction a 2'-deoxyadenosine in DNA + S-adenosyl-L-methionine = an N(6)-methyl-2'-deoxyadenosine in DNA + S-adenosyl-L-homocysteine + H(+). With respect to regulation, mg(2+) is absolutely required for DNA restriction. In terms of biological role, an E, G and S subtype restriction enzyme that recognizes the (non-palindromic) double-stranded sequence 5'-CTGAAG-3' and cleaves respectively 22 bases after C-1 and 14 bases before C'-1; cleavage of lambda DNA is never complete. Also acts as a methylase that causes specific methylation on A-5 in 5'-CTGAAG-3', the other strand is methylated by the M.Eco57I methylase. This is Type II restriction enzyme and methyltransferase RM.Eco57I from Escherichia coli.